A 374-amino-acid polypeptide reads, in one-letter code: Pectate lyase 1 (374 aa).

A signal peptide spans 1-22; the sequence is MKYLLPSAAAGLLLLAAQPTMA. Cys93 and Cys176 form a disulfide bridge. Positions 150, 152, 187, and 191 each coordinate Ca(2+). Residue Arg239 is part of the active site. Residues Cys350 and Cys373 are joined by a disulfide bond.

The protein belongs to the polysaccharide lyase 1 family. PLADES subfamily. Ca(2+) is required as a cofactor.

The protein localises to the secreted. It carries out the reaction Eliminative cleavage of (1-&gt;4)-alpha-D-galacturonan to give oligosaccharides with 4-deoxy-alpha-D-galact-4-enuronosyl groups at their non-reducing ends.. The protein operates within glycan metabolism; pectin degradation; 2-dehydro-3-deoxy-D-gluconate from pectin: step 2/5. In terms of biological role, involved in maceration and soft-rotting of plant tissue. In Pectobacterium carotovorum (Erwinia carotovora), this protein is Pectate lyase 1 (pel1).